A 376-amino-acid chain; its full sequence is Succinyl-diaminopimelate desuccinylase 1 (376 aa).

Position 67 (His-67) interacts with Zn(2+). Asp-69 is an active-site residue. Asp-100 is a binding site for Zn(2+). The active-site Proton acceptor is the Glu-134. Zn(2+) is bound by residues Glu-135, Glu-163, and His-349.

The protein belongs to the peptidase M20A family. DapE subfamily. In terms of assembly, homodimer. Zn(2+) serves as cofactor. Co(2+) is required as a cofactor.

It carries out the reaction N-succinyl-(2S,6S)-2,6-diaminopimelate + H2O = (2S,6S)-2,6-diaminopimelate + succinate. It functions in the pathway amino-acid biosynthesis; L-lysine biosynthesis via DAP pathway; LL-2,6-diaminopimelate from (S)-tetrahydrodipicolinate (succinylase route): step 3/3. Its function is as follows. Catalyzes the hydrolysis of N-succinyl-L,L-diaminopimelic acid (SDAP), forming succinate and LL-2,6-diaminopimelate (DAP), an intermediate involved in the bacterial biosynthesis of lysine and meso-diaminopimelic acid, an essential component of bacterial cell walls. This is Succinyl-diaminopimelate desuccinylase 1 from Shewanella loihica (strain ATCC BAA-1088 / PV-4).